Here is a 341-residue protein sequence, read N- to C-terminus: Anthranilate phosphoribosyltransferase (341 aa).

5-phospho-alpha-D-ribose 1-diphosphate contacts are provided by residues Gly83, Ser91, 93 to 96 (NTST), 111 to 115 (KHGNR), and Ser123. Position 83 (Gly83) interacts with anthranilate. Ser95 is a binding site for Mg(2+). Asn114 is an anthranilate binding site. Arg169 provides a ligand contact to anthranilate. Mg(2+)-binding residues include Asp228 and Glu229.

This sequence belongs to the anthranilate phosphoribosyltransferase family. In terms of assembly, homodimer. Mg(2+) is required as a cofactor.

It carries out the reaction N-(5-phospho-beta-D-ribosyl)anthranilate + diphosphate = 5-phospho-alpha-D-ribose 1-diphosphate + anthranilate. It functions in the pathway amino-acid biosynthesis; L-tryptophan biosynthesis; L-tryptophan from chorismate: step 2/5. Catalyzes the transfer of the phosphoribosyl group of 5-phosphorylribose-1-pyrophosphate (PRPP) to anthranilate to yield N-(5'-phosphoribosyl)-anthranilate (PRA). This chain is Anthranilate phosphoribosyltransferase, found in Hyphomonas neptunium (strain ATCC 15444).